The sequence spans 142 residues: ATP synthase epsilon chain (142 aa).

The protein belongs to the ATPase epsilon chain family. As to quaternary structure, F-type ATPases have 2 components, CF(1) - the catalytic core - and CF(0) - the membrane proton channel. CF(1) has five subunits: alpha(3), beta(3), gamma(1), delta(1), epsilon(1). CF(0) has three main subunits: a, b and c.

It localises to the cell inner membrane. Its function is as follows. Produces ATP from ADP in the presence of a proton gradient across the membrane. The polypeptide is ATP synthase epsilon chain (Actinobacillus succinogenes (strain ATCC 55618 / DSM 22257 / CCUG 43843 / 130Z)).